Reading from the N-terminus, the 308-residue chain is MQLIIATRKSQLALWQSEYIKNKLSQTHSDLEISLEGFKTKGDVLLDSPLAKIGGKGLFTKELEESMLRGDSHLAVHSLKDVPSFFPKGLVLAAISKREEVNDAFLSEYYESLNALPKGAKVGTTSLRRRMQLLALRPDLNIISLRGNINSRLEKLKAKEFDAIILAFAGIKRLGLEKQIKFVKKFELDEMIPAASQGALGIESIDDKQILKYLECLNDKNAFVETHIERDFIKTLEGGCQVPIGINAKIIDEKIEIRAIVGLPDASKILKEKRMIDKQDYAKAGELLAKEMIAKGAKEILKEAESMI.

Cys240 carries the post-translational modification S-(dipyrrolylmethanemethyl)cysteine.

The protein belongs to the HMBS family. In terms of assembly, monomer. Dipyrromethane serves as cofactor.

The enzyme catalyses 4 porphobilinogen + H2O = hydroxymethylbilane + 4 NH4(+). It functions in the pathway porphyrin-containing compound metabolism; protoporphyrin-IX biosynthesis; coproporphyrinogen-III from 5-aminolevulinate: step 2/4. Its function is as follows. Tetrapolymerization of the monopyrrole PBG into the hydroxymethylbilane pre-uroporphyrinogen in several discrete steps. The polypeptide is Porphobilinogen deaminase (Campylobacter lari (strain RM2100 / D67 / ATCC BAA-1060)).